Consider the following 364-residue polypeptide: Zinc finger protein CONSTANS-LIKE 12 (364 aa).

Residues Cys-5, Cys-8, Cys-28, and His-33 each coordinate Zn(2+). Residues 5 to 47 form a B box-type 1; atypical zinc finger; the sequence is CDHCATSQALIYCKSDLAKLCLNCDVHVHSANPLSHRHIRSLI. The segment at 48–88 adopts a B box-type 2; degenerate zinc-finger fold; the sequence is CEKCFSQPAAIRCLDEKVSYCQGCHWHESNCSELGHRVQSL. The CCT domain occupies 280–322; sequence QDCGMSPGFIMSEAPWETNFEVSCPQARNEAKLRYKEKKLKRS.

Belongs to the CONSTANS family.

The protein resides in the nucleus. The chain is Zinc finger protein CONSTANS-LIKE 12 (COL12) from Arabidopsis thaliana (Mouse-ear cress).